An 87-amino-acid polypeptide reads, in one-letter code: Small ribosomal subunit protein bS16 (87 aa).

It belongs to the bacterial ribosomal protein bS16 family.

This is Small ribosomal subunit protein bS16 from Psychrobacter sp. (strain PRwf-1).